The sequence spans 351 residues: sn-glycerol-3-phosphate import ATP-binding protein UgpC (351 aa).

In terms of domain architecture, ABC transporter spans 4–234; that stretch reads ITLDNLVKAY…PATTFVAGFI (231 aa). 36–43 provides a ligand contact to ATP; that stretch reads GPSGCGKS.

Belongs to the ABC transporter superfamily. sn-glycerol-3-phosphate importer (TC 3.A.1.1.3) family. As to quaternary structure, the complex is composed of two ATP-binding proteins (UgpC), two transmembrane proteins (UgpA and UgpE) and a solute-binding protein (UgpB).

It localises to the cell inner membrane. It carries out the reaction sn-glycerol 3-phosphate(out) + ATP + H2O = sn-glycerol 3-phosphate(in) + ADP + phosphate + H(+). Part of the ABC transporter complex UgpBAEC involved in sn-glycerol-3-phosphate (G3P) import. Responsible for energy coupling to the transport system. This chain is sn-glycerol-3-phosphate import ATP-binding protein UgpC, found in Ruegeria pomeroyi (strain ATCC 700808 / DSM 15171 / DSS-3) (Silicibacter pomeroyi).